Reading from the N-terminus, the 1401-residue chain is METTSLQRKFPEWMSMQSQRCATEEKACVQKSVLEDNLPFLEFPGSIVYSYEASDCSFLSEDISMRLSDGDVVGFDMEWPPIYKPGKRSRVAVIQLCVSESKCYLFHISSMSVFPQGLKMLLENKSIKKAGVGIEGDQWKLLRDFDVKLESFVELTDVANEKLKCAETWSLNGLVKHVLGKQLLKDKSIRCSNWSNFPLTEDQKLYAATDAYAGLIIYQKLGNLGDTAQVFALNKAEENLPLEMKKQLNSISEEMRDLANRFPVTCRNLETLQRVPVILKSISENLCSLRKVICGPTNTETRLKPGSSFNLLSSEDSAAAGEKEKQIGKHSTFAKIKEEPWDPELDSLVKQEEVDVFRNQVKQEKGESENEIEDNLLREDMERTCVIPSISENELQDLEQQAKEEKYNDVSHQLSEHLSPNDDENDSSYIIESDEDLEMEMLKSLENLNSDVVEPTHSTWLEMGTNGRLPPEEEDGHGNEAIKEEQEEEDHLLPEPNAKQINCLKTYFGHSSFKPVQWKVIHSVLEERRDNVVVMATGYGKSLCFQYPPVYTGKIGIVISPLISLMEDQVLQLELSNVPACLLGSAQSKNILGDVKLGKYRVIYITPEFCSGNLDLLQQLDSSIGITLIAVDEAHCISEWGHDFRSSFRMLGSLKTALPLVPVIALSATASSSIREDIISCLNLKDPQITCTGFDRPNLYLEVGRKTGNILQDLKPFLVRKASSAWEFEGPTIIYCPSRKMTEQVTAELGKLNLACRTYHAGMKISERKDVHHRFLRDEIQCVVATVAFGMGINKADIRKVIHYGAPKEMESYYQEIGRAGRDGLQSSCHLLWAPADFNTSRNLLIEIHDEKFRLYKLKMMVKMEKYLHSSQCRRRIILSHFEDKCLQKASLDIMGTEKCCDNCRPRLNHCLTANNSEDASQDFGPQAFQLLSAVDILQEKFGIGIPILFLRGSNSQRLPDKYRGHRLFGAGKEQAESWWKTLSHHLIAEGFLVEVPKENKYIKTCSLTKKGRKWLGEASSQSPPSLLLQANEEMFPRKVLLPSSNPVSPETTQHSSNQNPAGLTTKQSNLERTHSYKVPEKVSSGTNIPKKSAVMPSPGTSSSPLEPAISAQELDARTGLYARLVEARQKHANKMDVPPAILATNKVLLDMAKMRPTTVENMKQIDGVSEGKAALLAPLLEVIKHFCQVTSVQTDLLSSAKPHKEQEKSQEMEKKDCSLPQSVAVTYTLFQEKKMPLHSIAENRLLPLTAAGMHLAQAVKAGYPLDMERAGLTPETWKIIMDVIRNPPINSDMYKVKLIRMLVPENLDTYLIHMAIEILQSGSDSRTQPPCDSSRKRRFPSSAESCESCKESKEAVTETKASSSESKRKLPEWFAKGNVPSADTGSSSSMAKTKKKGLFS.

Positions 1–271 are interaction with WRNIP1; that stretch reads METTSLQRKF…FPVTCRNLET (271 aa). The KBM 1 signature appears at 6–18; the sequence is LQRKFPEWMSMQS. A 3'-5' exonuclease domain is found at 51–223; it reads YEASDCSFLS…GLIIYQKLGN (173 aa). 2 residues coordinate Zn(2+): D76 and E78. A Glycyl lysine isopeptide (Lys-Gly) (interchain with G-Cter in SUMO2) cross-link involves residue K148. D210 lines the Zn(2+) pocket. Residues K235 and K246 each participate in a glycyl lysine isopeptide (Lys-Gly) (interchain with G-Cter in SUMO2) cross-link. Positions 401–427 are disordered; it reads QAKEEKYNDVSHQLSEHLSPNDDENDS. 3 positions are modified to phosphoserine: S419, S433, and S444. The tract at residues 464–492 is disordered; the sequence is GTNGRLPPEEEDGHGNEAIKEEQEEEDHL. The Helicase ATP-binding domain occupies 522–688; sequence HSVLEERRDN…ISCLNLKDPQ (167 aa). Position 535–542 (535–542) interacts with ATP; it reads MATGYGKS. The DEAH box motif lies at 632-635; sequence DEAH. A Helicase C-terminal domain is found at 713–866; that stretch reads DLKPFLVRKA…KLKMMVKMEK (154 aa). Residues C873, C900, C901, and C904 each coordinate Zn(2+). The segment at 952–958 is interaction with DNA; sequence RGSNSQR. Residues 1041–1106 form a disordered region; the sequence is LLPSSNPVSP…PSPGTSSSPL (66 aa). Residues 1043 to 1069 show a composition bias toward polar residues; sequence PSSNPVSPETTQHSSNQNPAGLTTKQS. A compositionally biased stretch (basic and acidic residues) spans 1070–1081; it reads NLERTHSYKVPE. Residue S1098 is modified to Phosphoserine. Residues 1115–1194 form the HRDC domain; it reads LDARTGLYAR…KHFCQVTSVQ (80 aa). Polar residues predominate over residues 1323–1332; the sequence is GSDSRTQPPC. The tract at residues 1323 to 1401 is disordered; that stretch reads GSDSRTQPPC…AKTKKKGLFS (79 aa). Residues 1348–1358 show a composition bias toward basic and acidic residues; it reads ESCKESKEAVT. Phosphoserine is present on S1364. Positions 1367 to 1376 match the KBM 2 motif; the sequence is SKRKLPEWFA. The span at 1382–1392 shows a compositional bias: polar residues; that stretch reads SADTGSSSSMA. Residues 1388 to 1401 carry the XLM motif; sequence SSSMAKTKKKGLFS.

It belongs to the helicase family. RecQ subfamily. Monomer, and homooligomer. May exist as homodimer, homotrimer, homotetramer and/or homohexamer. Homotetramer, or homohexamer, when bound to DNA. Interacts via its N-terminal domain with WRNIP1. Interacts with EXO1, PCNA and SUPV3L1. Interacts with PML (isoform PML-4). Interacts (via KBM motif) with XRCC5 and XRCC6; promoting recruitment to DNA damage sites. Interacts with RECQL5; this interaction stimulates WRN helicase activity on DNA fork duplexes. Requires Zn(2+) as cofactor. The cofactor is Mn(2+). Post-translationally, phosphorylated by PRKDC. In terms of tissue distribution, expressed ubiquitously in most organs at a low level, highly expressed in testis, ovary and spleen.

It is found in the nucleus. It localises to the nucleolus. The protein resides in the nucleoplasm. Its subcellular location is the chromosome. It catalyses the reaction Couples ATP hydrolysis with the unwinding of duplex DNA by translocating in the 3'-5' direction.. It carries out the reaction ATP + H2O = ADP + phosphate + H(+). Its activity is regulated as follows. Zinc ions stimulate the exonuclease activity. In terms of biological role, multifunctional enzyme that has magnesium and ATP-dependent 3'-5' DNA-helicase activity. Has 3'-&gt;5' exonuclease activity on forked dsDNA. Has no nuclease activity towards single-stranded DNA or blunt-ended double-stranded DNA. Binds preferentially to DNA substrates containing alternate secondary structures, such as replication forks and Holliday junctions. May play an important role in the dissociation of joint DNA molecules that can arise as products of homologous recombination, at stalled replication forks or during DNA repair. Alleviates stalling of DNA polymerases at the site of DNA lesions. Unwinds some G-quadruplex DNA. Plays a role in the formation of DNA replication focal centers; stably associates with foci elements generating binding sites for RP-A. Plays a role in double-strand break repair after gamma-irradiation. This is Bifunctional 3'-5' exonuclease/ATP-dependent helicase WRN (Wrn) from Mus musculus (Mouse).